A 389-amino-acid polypeptide reads, in one-letter code: Phospholipid phosphatase-related protein type 2 (389 aa).

Transmembrane regions (helical) follow at residues 14–34 (IIPCFVFVEILLGELARAFFP) and 66–86 (FLGVYSFGLFTTTIFANAGQV). Asparagine 102 carries an N-linked (GlcNAc...) asparagine glycan. The next 3 membrane-spanning stretches (helical) occupy residues 147-167 (AALCAYAVTYTAMYVTLVFRV), 176-196 (SLCLALLCPAFLVGVVRVAEY), and 203-223 (VLAGFLTGAAIATFLVTCVVH). A phosphoserine mark is found at serine 236 and serine 249. 2 disordered regions span residues 255-280 (SVAQEPEGCRSHSTPARLTPSKPQNC) and 295-351 (APAM…GRKL). The span at 265-278 (SHSTPARLTPSKPQ) shows a compositional bias: polar residues. Positions 314–339 (TPLPLPLPLPAPAPSQGPSPSSPGPG) are enriched in pro residues.

The protein belongs to the PA-phosphatase related phosphoesterase family.

The protein localises to the membrane. The protein is Phospholipid phosphatase-related protein type 2 of Bos taurus (Bovine).